We begin with the raw amino-acid sequence, 318 residues long: Olfactory receptor 2A2 (318 aa).

The Extracellular segment spans residues 1-24; it reads MEGNQTWITDITLLGFQVGPALAI. The N-linked (GlcNAc...) asparagine glycan is linked to Asn-4. A helical membrane pass occupies residues 25 to 48; that stretch reads LLCGLFSVFYTLTLLGNGVIFGII. Residues 49 to 56 are Cytoplasmic-facing; sequence CLDSKLHT. The helical transmembrane segment at 57-78 threads the bilayer; it reads PMYFFLSHLAIIDMSYASNNVP. At 79 to 99 the chain is on the extracellular side; that stretch reads KMLANLMNQKRTISFVPCIMQ. Residues 100-119 traverse the membrane as a helical segment; it reads TFLYLAFAVTECLILVVMSY. Residues 120 to 138 are Cytoplasmic-facing; the sequence is DRYVAICHPFQYTVIMSWR. Residues 139 to 157 traverse the membrane as a helical segment; sequence VCTILVLTSWSCGFALSLV. The Extracellular segment spans residues 158–194; it reads HEILLLRLPFCGPRDVNHLFCEILSVLKLACADTWVN. A helical transmembrane segment spans residues 195–218; sequence QVVIFATCVFVLVGPLSLILVSYM. Topologically, residues 219–235 are cytoplasmic; sequence HILGAILKIQTKEGRIK. Residues 236–258 traverse the membrane as a helical segment; that stretch reads AFSTCSSHLCVVGLFFGIAMVVY. The Extracellular portion of the chain corresponds to 259 to 271; the sequence is MVPDSNQREEQEK. The helical transmembrane segment at 272-291 threads the bilayer; it reads MLSLFHSVFNPMLNPLIYSL. Over 292 to 310 the chain is Cytoplasmic; it reads RNAQLKGALHRALQRKRSM.

Belongs to the G-protein coupled receptor 1 family.

Its subcellular location is the cell membrane. Functionally, odorant receptor. The chain is Olfactory receptor 2A2 (OR2A2) from Homo sapiens (Human).